We begin with the raw amino-acid sequence, 369 residues long: MGERKGQNFYYPPDFNYKTHKSLNGYHGTHALRERAKKIDQGILVIRFEMPFNIWCLGCHNHVGMGVRYNAEKKKIGMYYTTPLHEFRMKCHLCDNYYVIRTDPKNFDYELVEGCSRQELRFDPTDIAQIGAVDRGFTQKLAADAMFKKEHEAEDKDKAATEEGRVDKLEWIQERMRDDFTANSFLRAQFRNEKKSLNETRARDANLRDKLSIGTTQLLPETEEDRRIASMMTRYRDTKTHDDHLESSRDRIESRRIFRRPEETDTPSTSSGSSGGAVPSASERLKATMKAERDKRINASFSTAGTSSATQKLLGIKRKSASSLGVQIKKAAPENSSLQDEEPAVEKPNISNPISLIAQEYGNSSDDSD.

The segment covering 233–263 (TRYRDTKTHDDHLESSRDRIESRRIFRRPEE) has biased composition (basic and acidic residues). The interval 233-369 (TRYRDTKTHD…EYGNSSDDSD (137 aa)) is disordered. A compositionally biased stretch (low complexity) spans 266–282 (TPSTSSGSSGGAVPSAS). A compositionally biased stretch (basic and acidic residues) spans 283 to 297 (ERLKATMKAERDKRI). Over residues 299–310 (ASFSTAGTSSAT) the composition is skewed to low complexity.

It belongs to the CWC16 family.

The sequence is that of Coiled-coil domain-containing protein 130 homolog from Caenorhabditis elegans.